The primary structure comprises 197 residues: Small ribosomal subunit protein uS10c (197 aa).

A chloroplast-targeting transit peptide spans 1 to 60 (MATSSLSTIVFSPLALSNSSSFPNKPQVSNLSLHSSLSNLRRTLSHSSPSSSSSSNVRVF). Residues 67–91 (ESQETGPESYVEEGSETSALGIGAD) are disordered.

The protein belongs to the universal ribosomal protein uS10 family. As to quaternary structure, part of the 30S ribosomal subunit.

It localises to the plastid. Its subcellular location is the chloroplast. The chain is Small ribosomal subunit protein uS10c (RPS10) from Mesembryanthemum crystallinum (Common ice plant).